The primary structure comprises 1397 residues: Clustered mitochondria protein homolog (1397 aa).

Residues Leu-30–Thr-63 form a TPR 1 repeat. Disordered regions lie at residues Thr-158–Glu-203 and Asp-526–Glu-555. Residues Gly-161 to Glu-203 show a composition bias toward basic and acidic residues. In terms of domain architecture, Clu spans Asp-368–Ile-640. The TPR 2 repeat unit spans residues Glu-559 to Gly-595. Basic and acidic residues-rich tracts occupy residues Glu-686–Ser-703, Glu-812–Ala-831, Ser-839–Ser-860, and Gln-1019–Lys-1033. 3 disordered regions span residues Glu-686–Leu-707, Glu-812–Pro-869, and Gln-1019–Asn-1050. Positions Lys-1034 to Ser-1043 are enriched in basic residues. 2 TPR repeats span residues Ile-1167–Thr-1200 and Val-1209–Leu-1242. Composition is skewed to polar residues over residues Ala-1314–Ser-1338 and Pro-1362–Val-1373. The tract at residues Ala-1314–Ala-1397 is disordered. The segment covering Asp-1375–Ser-1384 has biased composition (basic and acidic residues). Residues Pro-1386–Ala-1397 are compositionally biased toward basic residues.

It belongs to the CLU family. In terms of assembly, may associate with the eukaryotic translation initiation factor 3 (eIF-3) complex.

The protein localises to the cytoplasm. In terms of biological role, mRNA-binding protein involved in proper cytoplasmic distribution of mitochondria. This Lodderomyces elongisporus (strain ATCC 11503 / CBS 2605 / JCM 1781 / NBRC 1676 / NRRL YB-4239) (Yeast) protein is Clustered mitochondria protein homolog.